We begin with the raw amino-acid sequence, 44 residues long: DNA-directed RNA polymerase subunit Rpo12 (44 aa).

Zn(2+)-binding residues include cysteine 8, cysteine 22, and cysteine 25.

It belongs to the archaeal Rpo12/eukaryotic RPC10 RNA polymerase subunit family. Part of the RNA polymerase complex. It depends on Zn(2+) as a cofactor.

Its subcellular location is the cytoplasm. It carries out the reaction RNA(n) + a ribonucleoside 5'-triphosphate = RNA(n+1) + diphosphate. In terms of biological role, DNA-dependent RNA polymerase (RNAP) catalyzes the transcription of DNA into RNA using the four ribonucleoside triphosphates as substrates. This is DNA-directed RNA polymerase subunit Rpo12 from Haloquadratum walsbyi (strain DSM 16790 / HBSQ001).